The following is a 953-amino-acid chain: Lysosomal alpha-glucosidase (953 aa).

Positions 1-27 (MNIRKPLCSNSVVGACTLVSLTTAVIL) are cleaved as a signal peptide. Positions 28 to 69 (GHLMLRELMLLPQDLHESSSGLWKTYRPHHQESYEPAPLHIQ) are excised as a propeptide. The P-type domain maps to 80 to 131 (TQCDVTPNSRFDCAPDKGITQEQCEARGCCWVPAGQVLNGPVMGQPWCFFPP). Disulfide bonds link C82/C109, C92/C108, and C103/C127. N140, N233, and N390 each carry an N-linked (GlcNAc...) asparagine glycan. D404 is a binding site for substrate. N470 carries N-linked (GlcNAc...) asparagine glycosylation. Catalysis depends on D518, which acts as the Nucleophile. The active site involves E521. Residues C533 and C558 are joined by a disulfide bond. 2 residues coordinate substrate: R600 and D616. C647 and C658 are oxidised to a cystine. N652 carries an N-linked (GlcNAc...) asparagine glycan. H674 contributes to the substrate binding site. N-linked (GlcNAc...) asparagine glycans are attached at residues N883 and N926.

It belongs to the glycosyl hydrolase 31 family.

It is found in the lysosome. The protein resides in the lysosome membrane. The enzyme catalyses Hydrolysis of terminal, non-reducing (1-&gt;4)-linked alpha-D-glucose residues with release of alpha-D-glucose.. In terms of biological role, essential for the degradation of glycogen in lysosomes. Has highest activity on alpha-1,4-linked glycosidic linkages, but can also hydrolyze alpha-1,6-linked glucans. The sequence is that of Lysosomal alpha-glucosidase (Gaa) from Rattus norvegicus (Rat).